Consider the following 198-residue polypeptide: Inner membrane-spanning protein YciB (198 aa).

The next 5 helical transmembrane spans lie at isoleucine 36 to leucine 56, leucine 67 to phenylalanine 87, tryptophan 90 to glycine 110, leucine 133 to phenylalanine 153, and phenylalanine 162 to leucine 182.

The protein belongs to the YciB family.

It localises to the cell inner membrane. Plays a role in cell envelope biogenesis, maintenance of cell envelope integrity and membrane homeostasis. This is Inner membrane-spanning protein YciB from Pseudomonas savastanoi pv. phaseolicola (strain 1448A / Race 6) (Pseudomonas syringae pv. phaseolicola (strain 1448A / Race 6)).